The sequence spans 377 residues: MSSSVAEANHTEKEESLRLAIAVSLLRSKFQNHQSSSSTSRCYVSSESDALRWKQKAKERKKEIIRLQEDLKDAESSFHRDLFPANASCKCYFFDNLGVFSGRRIGEASESRFNDVLRRRFLRLARRRSRRKLTRSSQRLQPSEPDYEEEAEHLRISIDFLLELSEADSNDSNFSNWSHQAVDFIFASLKKLISMGRNLESVEESISFMITQLITRMCTPVKGNEVKQLETSVGFYVQHLIRKLGSEPFIGQRAIFAISQRISILAENLLFMDPFDESFPEMDECMFILIQLIEFLICDYLLPWANEAFDNVMFEEWIASVVHARKAVKALEERNGLYLLYMDRVTGELAKRVGQITSFREVEPAILDKILAYQEIE.

Positions 117–124 (LRRRFLRL) match the Nuclear localization signal motif.

In terms of tissue distribution, expressed in roots, stems, leaves, inflorescences and seedlings. Strongly expressed in meiocytes.

It is found in the nucleus. It localises to the cytoplasm. The protein localises to the cytoskeleton. The protein resides in the spindle. Involved in meiotic spindle organization in meiocytes thus regulating chromosome segregation. Required for formation of meiotic DNA double-strand breaks (DSBs) during early recombination processes. The polypeptide is Protein MULTIPOLAR SPINDLE 1 (Arabidopsis thaliana (Mouse-ear cress)).